Here is a 281-residue protein sequence, read N- to C-terminus: Merozoite surface protein 2 (281 aa).

The signal sequence occupies residues 1 to 20 (MKVIKTLSIINFFIFVTFNI). Residues Asn22 and Asn36 are each glycosylated (N-linked (GlcNAc...) asparagine). The interval 42-242 (SMEESNPPTG…DSQKECTDGN (201 aa)) is disordered. Positions 44-207 (EESNPPTGAS…EQTESPELQS (164 aa)) are polymorphic region. Repeat copies occupy residues 51 to 58 (GASGRAGA), 59 to 66 (GASGRAGA), and 67 to 74 (GASGRAGA). The interval 51-74 (GASGRAGAGASGRAGAGASGRAGA) is 3 X 8 AA tandem repeats of G-A-S-G-R-A-G-A. Gly residues predominate over residues 54 to 76 (GRAGAGASGRAGAGASGRAGAGA). Positions 77–133 (GAVASAGSGDGAVASAGNGANPGADAKRSTSTPATTTTTTTTNDAEASTSTSSENPN) are enriched in low complexity. Polar residues-rich tracts occupy residues 150-174 (NKANTETQNNSNVQQDSQTKSNVPP) and 181-209 (KSPTAQPEQAENSAPTAEQTESPELQSAP). N-linked (GlcNAc...) asparagine glycosylation occurs at Asn158. Asn230 carries an N-linked (GlcNAc...) asparagine glycan. Cysteines 238 and 246 form a disulfide. Asn254 and Asn255 each carry an N-linked (GlcNAc...) asparagine glycan. Asn255 carries the GPI-anchor amidated asparagine lipid modification. A propeptide spans 256–281 (SSNIASINKFVVLISATLVLSFAIFI) (removed in mature form).

It is found in the cell membrane. Functionally, may play a role in the merozoite attachment to the erythrocyte. In Plasmodium falciparum (isolate thtn / Thailand), this protein is Merozoite surface protein 2.